The chain runs to 185 residues: Elongation factor P (185 aa).

The protein belongs to the elongation factor P family.

It localises to the cytoplasm. It participates in protein biosynthesis; polypeptide chain elongation. Functionally, involved in peptide bond synthesis. Stimulates efficient translation and peptide-bond synthesis on native or reconstituted 70S ribosomes in vitro. Probably functions indirectly by altering the affinity of the ribosome for aminoacyl-tRNA, thus increasing their reactivity as acceptors for peptidyl transferase. The polypeptide is Elongation factor P (Thermosynechococcus vestitus (strain NIES-2133 / IAM M-273 / BP-1)).